The chain runs to 113 residues: Large ribosomal subunit protein uL22 (113 aa).

This sequence belongs to the universal ribosomal protein uL22 family. As to quaternary structure, part of the 50S ribosomal subunit.

In terms of biological role, this protein binds specifically to 23S rRNA; its binding is stimulated by other ribosomal proteins, e.g. L4, L17, and L20. It is important during the early stages of 50S assembly. It makes multiple contacts with different domains of the 23S rRNA in the assembled 50S subunit and ribosome. The globular domain of the protein is located near the polypeptide exit tunnel on the outside of the subunit, while an extended beta-hairpin is found that lines the wall of the exit tunnel in the center of the 70S ribosome. The chain is Large ribosomal subunit protein uL22 from Syntrophomonas wolfei subsp. wolfei (strain DSM 2245B / Goettingen).